The following is a 469-amino-acid chain: uncharacterized protein (469 aa).

Positions 1–19 (MRINFVLLITLILPWFVSG) are cleaved as a signal peptide. 7 helical membrane passes run 199–219 (IKST…TWLL), 236–256 (AFWV…MVAI), 283–303 (AYTS…PALV), 305–325 (YYVY…FAPL), 338–358 (ILLK…PFFA), 386–406 (IALA…RPLL), and 413–433 (GFQL…AFLF).

It is found in the membrane. This is an uncharacterized protein from Schizosaccharomyces pombe (strain 972 / ATCC 24843) (Fission yeast).